We begin with the raw amino-acid sequence, 503 residues long: ATP synthase subunit alpha (503 aa).

170–177 serves as a coordination point for ATP; it reads GDRQTGKT.

It belongs to the ATPase alpha/beta chains family. In terms of assembly, F-type ATPases have 2 components, CF(1) - the catalytic core - and CF(0) - the membrane proton channel. CF(1) has five subunits: alpha(3), beta(3), gamma(1), delta(1), epsilon(1). CF(0) has three main subunits: a(1), b(2) and c(9-12). The alpha and beta chains form an alternating ring which encloses part of the gamma chain. CF(1) is attached to CF(0) by a central stalk formed by the gamma and epsilon chains, while a peripheral stalk is formed by the delta and b chains.

The protein localises to the cell inner membrane. It catalyses the reaction ATP + H2O + 4 H(+)(in) = ADP + phosphate + 5 H(+)(out). Its function is as follows. Produces ATP from ADP in the presence of a proton gradient across the membrane. The alpha chain is a regulatory subunit. This is ATP synthase subunit alpha from Thermotoga maritima (strain ATCC 43589 / DSM 3109 / JCM 10099 / NBRC 100826 / MSB8).